A 276-amino-acid polypeptide reads, in one-letter code: Putative oxidoreductase SadH (276 aa).

Residue Ser-142 coordinates substrate. Tyr-155 acts as the Proton acceptor in catalysis.

It belongs to the short-chain dehydrogenases/reductases (SDR) family.

Required for maintaining the appropriate mycolic acid composition and permeability of the envelope on its exposure to acidic pH. The polypeptide is Putative oxidoreductase SadH (sadH) (Mycobacterium tuberculosis (strain CDC 1551 / Oshkosh)).